The following is a 129-amino-acid chain: Large ribosomal subunit protein bL20 (129 aa).

It belongs to the bacterial ribosomal protein bL20 family.

Functionally, binds directly to 23S ribosomal RNA and is necessary for the in vitro assembly process of the 50S ribosomal subunit. It is not involved in the protein synthesizing functions of that subunit. This Mycobacterium tuberculosis (strain ATCC 25177 / H37Ra) protein is Large ribosomal subunit protein bL20.